Reading from the N-terminus, the 340-residue chain is Phosphate acyltransferase (340 aa).

It belongs to the PlsX family. In terms of assembly, homodimer. Probably interacts with PlsY.

Its subcellular location is the cytoplasm. It carries out the reaction a fatty acyl-[ACP] + phosphate = an acyl phosphate + holo-[ACP]. The protein operates within lipid metabolism; phospholipid metabolism. Catalyzes the reversible formation of acyl-phosphate (acyl-PO(4)) from acyl-[acyl-carrier-protein] (acyl-ACP). This enzyme utilizes acyl-ACP as fatty acyl donor, but not acyl-CoA. The chain is Phosphate acyltransferase from Clostridioides difficile (strain 630) (Peptoclostridium difficile).